We begin with the raw amino-acid sequence, 701 residues long: Methionine--tRNA ligase (701 aa).

The 'HIGH' region signature appears at 13–23; the sequence is PYANGSIHLGH. Cys-144, Cys-147, Cys-157, and Cys-160 together coordinate Zn(2+). Residues 336–340 carry the 'KMSKS' region motif; it reads KMSKS. Lys-339 is an ATP binding site. One can recognise a tRNA-binding domain in the interval 600–701; sequence DFSKIDLRIA…SGAQPGMRVK (102 aa).

It belongs to the class-I aminoacyl-tRNA synthetase family. MetG type 1 subfamily. In terms of assembly, homodimer. It depends on Zn(2+) as a cofactor.

It is found in the cytoplasm. The enzyme catalyses tRNA(Met) + L-methionine + ATP = L-methionyl-tRNA(Met) + AMP + diphosphate. Functionally, is required not only for elongation of protein synthesis but also for the initiation of all mRNA translation through initiator tRNA(fMet) aminoacylation. In Nitrosomonas eutropha (strain DSM 101675 / C91 / Nm57), this protein is Methionine--tRNA ligase.